The chain runs to 359 residues: snRNA-activating protein complex subunit 2 (359 aa).

Basic residues predominate over residues 1 to 11 (MKPPQRRRRVP). 3 disordered regions span residues 1-22 (MKPP…TGPT), 157-221 (NQDG…GSST), and 291-327 (TALP…SEPI).

Part of the SNAPc complex composed of 5 subunits: SNAPC1, SNAPC2, SNAPC3, SNAPC4 and SNAPC5. SNAPC2 interacts with TBP and SNAPC4.

Its subcellular location is the nucleus. Functionally, part of the SNAPc complex required for the transcription of both RNA polymerase II and III small-nuclear RNA genes. Binds to the proximal sequence element (PSE), a non-TATA-box basal promoter element common to these 2 types of genes. Recruits TBP and BRF2 to the U6 snRNA TATA box. The sequence is that of snRNA-activating protein complex subunit 2 (Snapc2) from Mus musculus (Mouse).